A 1258-amino-acid chain; its full sequence is Ice nucleation protein (1258 aa).

The octapeptide periodicity stretch occupies residues 162-1217; that stretch reads ATYGSTLSGT…LTAGENSVLI (1056 aa). Disordered stretches follow at residues 260 to 287, 311 to 342, 356 to 383, 407 to 438, and 452 to 480; these read YGSTQTAGEDSSLTAGYGSTQTAQKGSD, TQTAGEESTQTAGYGSTQTAQKGSDLTAGYGS, and YGSTQTAGEDSSLTAGYGSTQTAQKGSDL. Composition is skewed to polar residues over residues 261–286, 311–334, 357–382, 407–430, and 453–480; these read GSTQTAGEDSSLTAGYGSTQTAQKGS, TQTAGEESTQTAGYGSTQTAQKGS, and GSTQTAGEDSSLTAGYGSTQTAQKGSDL.

The protein belongs to the bacterial ice nucleation protein family.

The protein localises to the cell outer membrane. Ice nucleation proteins enable bacteria to nucleate crystallization in supercooled water. The protein is Ice nucleation protein (iceE) of Enterobacter agglomerans (Erwinia herbicola).